The chain runs to 447 residues: Tubulin beta chain (447 aa).

8 residues coordinate GTP: Gln-11, Glu-69, Ser-138, Gly-142, Thr-143, Gly-144, Asn-204, and Asn-226. Residue Glu-69 coordinates Mg(2+). The segment at Val-419–Met-447 is disordered. Over residues Thr-429–Met-447 the composition is skewed to acidic residues.

Belongs to the tubulin family. Dimer of alpha and beta chains. A typical microtubule is a hollow water-filled tube with an outer diameter of 25 nm and an inner diameter of 15 nM. Alpha-beta heterodimers associate head-to-tail to form protofilaments running lengthwise along the microtubule wall with the beta-tubulin subunit facing the microtubule plus end conferring a structural polarity. Microtubules usually have 13 protofilaments but different protofilament numbers can be found in some organisms and specialized cells. It depends on Mg(2+) as a cofactor.

It is found in the cytoplasm. The protein resides in the cytoskeleton. In terms of biological role, tubulin is the major constituent of microtubules, a cylinder consisting of laterally associated linear protofilaments composed of alpha- and beta-tubulin heterodimers. Microtubules grow by the addition of GTP-tubulin dimers to the microtubule end, where a stabilizing cap forms. Below the cap, tubulin dimers are in GDP-bound state, owing to GTPase activity of alpha-tubulin. The sequence is that of Tubulin beta chain (TUBB) from Hordeum vulgare (Barley).